Here is a 395-residue protein sequence, read N- to C-terminus: MMPNSRSATITPTTESTTTTTTTTTTLTTSYWCYSCTRFISVWEDQDANAGVLCPYCNGGFIEEIEDSSNSTVAAIPASTPEVRSVEETHRSIIRRRRSNRRTSFNPVIVLHGGGGGGAGERVENEEGDGATRERRAYEFYYDDGSGSGLRPLPDSVSEILMGSGFERLLEQLSQIEASGNGIGRSGNPPASKSAIESLPRVEISDCHTKAEANCAVCTEVFEAGIEGREMPCKHIFHGDCIVPWLSIRNSCPVCRFELPSDPIQRSNEEEHAVGMTIWRLPGGGFAVGRFNAGVREGERILPVVLTEMDGGGLGSNEGPRRISWVRAHETPEMSRNGGRSGNGGRLRRAVRGMVSFMRRVRPSRGSSNSNVIDLDSDGETRVMNRSTSLIRRFF.

Disordered stretches follow at residues 1-22 (MMPNSRSATITPTTESTTTTTT) and 107-130 (PVIVLHGGGGGGAGERVENEEGDG). Over residues 9 to 22 (TITPTTESTTTTTT) the composition is skewed to low complexity. The segment covering 121–130 (ERVENEEGDG) has biased composition (basic and acidic residues). Residues 215-256 (CAVCTEVFEAGIEGREMPCKHIFHGDCIVPWLSIRNSCPVCR) form an RING-type; atypical zinc finger.

In terms of tissue distribution, expressed in root tips, leaf tips, junction of carpels and pedicels, stigma, anthers, pollen, vasculature of sepals and petals, immature seeds and embryos.

It is found in the cytoplasm. The protein resides in the cytosol. The protein localises to the nucleus. It carries out the reaction S-ubiquitinyl-[E2 ubiquitin-conjugating enzyme]-L-cysteine + [acceptor protein]-L-lysine = [E2 ubiquitin-conjugating enzyme]-L-cysteine + N(6)-ubiquitinyl-[acceptor protein]-L-lysine.. The protein operates within protein modification; protein ubiquitination. E3 ubiquitin-protein ligase involved in the positive regulation of abscisic acid-dependent drought stress responses. Involved in the positive regulation of responses to salt and osmotic stresses during seed germination and early seedling development. Possesses E3 ubiquitin ligase activity in vitro. This chain is E3 ubiquitin-protein ligase RDUF1, found in Arabidopsis thaliana (Mouse-ear cress).